The sequence spans 173 residues: NADH-quinone oxidoreductase subunit I 1 (173 aa).

4Fe-4S ferredoxin-type domains lie at 41–73 (IVLT…LAKA) and 83–112 (EHFR…LTPD). Cys-53, Cys-56, Cys-59, Cys-63, Cys-92, Cys-95, Cys-98, and Cys-102 together coordinate [4Fe-4S] cluster.

It belongs to the complex I 23 kDa subunit family. As to quaternary structure, NDH-1 is composed of 14 different subunits. Subunits NuoA, H, J, K, L, M, N constitute the membrane sector of the complex. The cofactor is [4Fe-4S] cluster.

The protein localises to the cell inner membrane. The catalysed reaction is a quinone + NADH + 5 H(+)(in) = a quinol + NAD(+) + 4 H(+)(out). In terms of biological role, NDH-1 shuttles electrons from NADH, via FMN and iron-sulfur (Fe-S) centers, to quinones in the respiratory chain. The immediate electron acceptor for the enzyme in this species is believed to be ubiquinone. Couples the redox reaction to proton translocation (for every two electrons transferred, four hydrogen ions are translocated across the cytoplasmic membrane), and thus conserves the redox energy in a proton gradient. This is NADH-quinone oxidoreductase subunit I 1 from Rhodopseudomonas palustris (strain BisA53).